The primary structure comprises 191 residues: uncharacterized protein (191 aa).

The signal sequence occupies residues 1–23; it reads MKKTMSAITAAAAVTSCFTGFGA.

This is an uncharacterized protein from Bacillus subtilis (strain 168).